Reading from the N-terminus, the 362-residue chain is Phospho-N-acetylmuramoyl-pentapeptide-transferase (362 aa).

10 helical membrane passes run valine 27 to tryptophan 47, threonine 73 to leucine 93, tyrosine 97 to tryptophan 117, tryptophan 132 to alanine 152, leucine 160 to leucine 180, glycine 200 to alanine 220, alanine 237 to phenylalanine 257, valine 264 to valine 284, isoleucine 289 to valine 309, and glutamine 339 to leucine 359.

Belongs to the glycosyltransferase 4 family. MraY subfamily. The cofactor is Mg(2+).

Its subcellular location is the cell inner membrane. It carries out the reaction UDP-N-acetyl-alpha-D-muramoyl-L-alanyl-gamma-D-glutamyl-meso-2,6-diaminopimeloyl-D-alanyl-D-alanine + di-trans,octa-cis-undecaprenyl phosphate = di-trans,octa-cis-undecaprenyl diphospho-N-acetyl-alpha-D-muramoyl-L-alanyl-D-glutamyl-meso-2,6-diaminopimeloyl-D-alanyl-D-alanine + UMP. It functions in the pathway cell wall biogenesis; peptidoglycan biosynthesis. Functionally, catalyzes the initial step of the lipid cycle reactions in the biosynthesis of the cell wall peptidoglycan: transfers peptidoglycan precursor phospho-MurNAc-pentapeptide from UDP-MurNAc-pentapeptide onto the lipid carrier undecaprenyl phosphate, yielding undecaprenyl-pyrophosphoryl-MurNAc-pentapeptide, known as lipid I. The protein is Phospho-N-acetylmuramoyl-pentapeptide-transferase of Aromatoleum aromaticum (strain DSM 19018 / LMG 30748 / EbN1) (Azoarcus sp. (strain EbN1)).